The primary structure comprises 547 residues: Elongator complex protein 3 (547 aa).

A Radical SAM core domain is found at 82 to 372 (RTASGIAVVA…YRVQRDIPMP (291 aa)). C99, C109, and C112 together coordinate [4Fe-4S] cluster. At S161 the chain carries Phosphoserine. Residue K164 participates in acetyl-CoA binding. Position 229 is an N6-methyllysine (K229). Phosphotyrosine is present on Y251. Positions 396–547 (IQCRDVRTRE…QGPYMVKMLK (152 aa)) constitute an N-acetyltransferase domain. Residues 474–477 (ELHV), 497–499 (FGM), and Y530 contribute to the acetyl-CoA site.

Belongs to the ELP3 family. As to quaternary structure, component of the elongator complex which consists of ELP1, ELP2, ELP3, ELP4, ELP5 and ELP6. ELP1, ELP2 and ELP3 form the elongator core complex. Interacts with alpha-tubulin. [4Fe-4S] cluster is required as a cofactor. Tyrosine-phosphorylated. Also serine/threonine-phosphorylated.

Its subcellular location is the cytoplasm. The protein localises to the nucleus. It carries out the reaction uridine(34) in tRNA + acetyl-CoA + S-adenosyl-L-methionine + H2O = 5-(carboxymethyl)uridine(34) in tRNA + 5'-deoxyadenosine + L-methionine + CoA + 2 H(+). Its pathway is tRNA modification; 5-methoxycarbonylmethyl-2-thiouridine-tRNA biosynthesis. In terms of biological role, catalytic tRNA acetyltransferase subunit of the elongator complex which is required for multiple tRNA modifications, including mcm5U (5-methoxycarbonylmethyl uridine), mcm5s2U (5-methoxycarbonylmethyl-2-thiouridine), and ncm5U (5-carbamoylmethyl uridine). In the elongator complex, acts as a tRNA uridine(34) acetyltransferase by mediating formation of carboxymethyluridine in the wobble base at position 34 in tRNAs. May also act as a protein lysine acetyltransferase by mediating acetylation of target proteins; such activity is however unclear in vivo and recent evidences suggest that ELP3 primarily acts as a tRNA acetyltransferase. Involved in neurogenesis: regulates the migration and branching of projection neurons in the developing cerebral cortex, through a process depending on alpha-tubulin acetylation. Required for acetylation of GJA1 in the developing cerebral cortex. This Mus musculus (Mouse) protein is Elongator complex protein 3.